We begin with the raw amino-acid sequence, 453 residues long: Bifunctional protein GlmU (453 aa).

The segment at Met-1–Arg-231 is pyrophosphorylase. Residues Leu-10–Gly-13, Lys-24, Gln-77, Gly-82–Thr-83, Tyr-105–Asp-107, Gly-143, Glu-157, Asn-172, and Asn-229 contribute to the UDP-N-acetyl-alpha-D-glucosamine site. Asp-107 contacts Mg(2+). Asn-229 is a Mg(2+) binding site. The interval Ala-232–Ser-252 is linker. Positions Gly-253–Gly-453 are N-acetyltransferase. UDP-N-acetyl-alpha-D-glucosamine is bound by residues Arg-318 and Lys-336. Catalysis depends on His-348, which acts as the Proton acceptor. Residues Tyr-351 and Asn-362 each coordinate UDP-N-acetyl-alpha-D-glucosamine. Acetyl-CoA-binding positions include Ala-365, Asn-371–Tyr-372, Ser-390, Ser-408, and Arg-425.

It in the N-terminal section; belongs to the N-acetylglucosamine-1-phosphate uridyltransferase family. In the C-terminal section; belongs to the transferase hexapeptide repeat family. In terms of assembly, homotrimer. It depends on Mg(2+) as a cofactor.

It is found in the cytoplasm. It catalyses the reaction alpha-D-glucosamine 1-phosphate + acetyl-CoA = N-acetyl-alpha-D-glucosamine 1-phosphate + CoA + H(+). It carries out the reaction N-acetyl-alpha-D-glucosamine 1-phosphate + UTP + H(+) = UDP-N-acetyl-alpha-D-glucosamine + diphosphate. Its pathway is nucleotide-sugar biosynthesis; UDP-N-acetyl-alpha-D-glucosamine biosynthesis; N-acetyl-alpha-D-glucosamine 1-phosphate from alpha-D-glucosamine 6-phosphate (route II): step 2/2. The protein operates within nucleotide-sugar biosynthesis; UDP-N-acetyl-alpha-D-glucosamine biosynthesis; UDP-N-acetyl-alpha-D-glucosamine from N-acetyl-alpha-D-glucosamine 1-phosphate: step 1/1. It participates in bacterial outer membrane biogenesis; LPS lipid A biosynthesis. Functionally, catalyzes the last two sequential reactions in the de novo biosynthetic pathway for UDP-N-acetylglucosamine (UDP-GlcNAc). The C-terminal domain catalyzes the transfer of acetyl group from acetyl coenzyme A to glucosamine-1-phosphate (GlcN-1-P) to produce N-acetylglucosamine-1-phosphate (GlcNAc-1-P), which is converted into UDP-GlcNAc by the transfer of uridine 5-monophosphate (from uridine 5-triphosphate), a reaction catalyzed by the N-terminal domain. The sequence is that of Bifunctional protein GlmU from Rhizobium leguminosarum bv. trifolii (strain WSM2304).